A 210-amino-acid chain; its full sequence is Ribonuclease HII (210 aa).

Residues 18–207 (RFVAGVDEVG…VHKILCKEET (190 aa)) form the RNase H type-2 domain. The a divalent metal cation site is built by D24, E25, and D115.

Belongs to the RNase HII family. The cofactor is Mn(2+). Requires Mg(2+) as cofactor.

It localises to the cytoplasm. The catalysed reaction is Endonucleolytic cleavage to 5'-phosphomonoester.. In terms of biological role, endonuclease that specifically degrades the RNA of RNA-DNA hybrids. This chain is Ribonuclease HII, found in Paracoccus denitrificans (strain Pd 1222).